We begin with the raw amino-acid sequence, 1082 residues long: MRTTPTFPTKTFKPTAMALAVATTLSACLGGGGGGTSAPDFNAGGTGIGSNSRATTAKSAAVSYAGIKNEMCKDRSMLCAGRDDVAVTDRDAKINAPPPNLHTGDFPNPNDAYKNLINLKPAIEAGYTGRGVEVGIVDTGESVGSISFPELYGRKEHGYNENYKNYTAYMRKEAPEDGGGKDIEASFDDEAVIETEAKPTDIRHVKEIGHIDLVSHIIGGRSVDGRPAGGIAPDATLHIMNTNDETKNEMMVAAIRNAWVKLGERGVRIVNNSFGTTSRAGTADLFQIANSEEQYRQALLDYSGGDKTDEGIRLMQQSDYGNLSYHIRNKNMLFIFSTGNDAQAQPNTYALLPFYEKDAQKGIITVAGVDRSGEKFKREMYGEPGTEPLEYGSNHCGITAMWCLSAPYEASVRFTRTNPIQIAGTSFSAPIVTGTAALLLQKYPWMSNDNLRTTLLTTAQDIGAVGVDSKFGWGLLDAGKAMNGPASFPFGDFTADTKGTSDIAYSFRNDISGTGGLIKKGGSQLQLHGNNTYTGKTIIEGGSLVLYGNNKSDMRVETKGALIYNGAASGGSLNSDGIVYLADTDQSGANETVHIKGSLQLDGKGTLYTRLGKLLKVDGTAIIGGKLYMSARGKGAGYLNSTGRRVPFLSAAKIGQDYSFFTNIETDGGLLASLDSVEKTAGSEGDTLSYYVRRGNAARTASAAAHSAPAGLKHAVEQGGSNLENLMVELDASESSATPETVETAAADRTDMPGIRPYGATFRAAAAVQHANAADGVRIFNSLAATVYADSTAAHADMQGRRLKAVSDGLDHNGTGLRVIAQTQQDGGTWEQGGVEGKMRGSTQTVGIAAKTGENTTAAATLGMGRSTWSENSANAKTDSISLFAGIRHDAGDIGYLKGLFSYGRYKNSISRSTGADEHAEGSVNGTLMQLGALGGVNVPFAATGDLTVEGGLRYDLLKQDAFAEKGSALGWSGNSLTEGTLVGLAGLKLSQPLSDKAVLFATAGVERDLNGRDYTVTGGFTGATAATGKTGARNMPHTRLVAGLGADVEFGNGWNGLARYSYAGSKQYGNHSGRVGVGYRF.

A signal peptide spans 1 to 27 (MRTTPTFPTKTFKPTAMALAVATTLSA). C28 carries N-palmitoyl cysteine lipidation. The S-diacylglycerol cysteine moiety is linked to residue C28. One can recognise a Peptidase S8 domain in the interval 110 to 482 (NDAYKNLINL…WGLLDAGKAM (373 aa)). Residues D138, H210, and S426 each act as charge relay system in the active site. Residues 808–1082 (DGLDHNGTGL…SGRVGVGYRF (275 aa)) form the Autotransporter domain.

The protein belongs to the peptidase S8 family. Probably auto-processes to yield a 68-70 kDa form and a C-terminal 30 kDa translocator domain; upon overexpression in situ and in E.coli full-length protein is seen as well as (probably) auto-processed forms of 68-70 kDa and 30 kDa in size, suggesting this may have protease activity.

The protein localises to the cell outer membrane. The protein resides in the cell surface. It is found in the secreted. Its subcellular location is the host cytoplasm. It localises to the host perinuclear region. Its activity is regulated as follows. Cleavage of host complement factor C3 is inhibited by PMSF. Functionally, major human immunogenic protein, detected in patients recovering from meningitidis. Autotransporter with a secreted protease domain involved in processing other autotransporter proteins including App, IgA, LbpB and NHBA. Probably autoprocesses to release the about 70 kDa passenger domain. Both cell surface protein (Neisserial autotransporter lipoprotein NalP) and the passenger domain cleave human (host) complement factor C3, generating a shorter alpha chain and a longer beta chain than normal. Uptake of a passenger domain fragment (residues 101-784) by human cells increases cell metabolic activity; the serine protease activity is required for this increase. In terms of biological role, cleaves human (host) complement factor C3, generating a shorter alpha chain and a longer beta chain than normal. Does not act on mouse or rabbit C3. Cleavage causes C3b degradation by human CFI and CFH, and thus decreases deposition of C3b on the bacteria surface and probably facilitates complement escape. Its function is as follows. Plays a role in extracellular-DNA (eDNA) mediated biofilm formation. In some strains (including cc32 strain MC58) eDNA stimulates biofilm formation. When NalP is not expressed (and no longer processes NHBA or IgA) biofilm formation increases. The chain is Neisserial autotransporter lipoprotein NalP from Neisseria meningitidis serogroup B (strain ATCC BAA-335 / MC58).